The sequence spans 284 residues: Phosphatidylserine decarboxylase proenzyme (284 aa).

Active-site charge relay system; for autoendoproteolytic cleavage activity residues include Asp-88, His-145, and Ser-251. The active-site Schiff-base intermediate with substrate; via pyruvic acid; for decarboxylase activity is the Ser-251. Residue Ser-251 is modified to Pyruvic acid (Ser); by autocatalysis.

Belongs to the phosphatidylserine decarboxylase family. PSD-B subfamily. Prokaryotic type I sub-subfamily. In terms of assembly, heterodimer of a large membrane-associated beta subunit and a small pyruvoyl-containing alpha subunit. Requires pyruvate as cofactor. Is synthesized initially as an inactive proenzyme. Formation of the active enzyme involves a self-maturation process in which the active site pyruvoyl group is generated from an internal serine residue via an autocatalytic post-translational modification. Two non-identical subunits are generated from the proenzyme in this reaction, and the pyruvate is formed at the N-terminus of the alpha chain, which is derived from the carboxyl end of the proenzyme. The autoendoproteolytic cleavage occurs by a canonical serine protease mechanism, in which the side chain hydroxyl group of the serine supplies its oxygen atom to form the C-terminus of the beta chain, while the remainder of the serine residue undergoes an oxidative deamination to produce ammonia and the pyruvoyl prosthetic group on the alpha chain. During this reaction, the Ser that is part of the protease active site of the proenzyme becomes the pyruvoyl prosthetic group, which constitutes an essential element of the active site of the mature decarboxylase.

The protein resides in the cell membrane. The catalysed reaction is a 1,2-diacyl-sn-glycero-3-phospho-L-serine + H(+) = a 1,2-diacyl-sn-glycero-3-phosphoethanolamine + CO2. Its pathway is phospholipid metabolism; phosphatidylethanolamine biosynthesis; phosphatidylethanolamine from CDP-diacylglycerol: step 2/2. Functionally, catalyzes the formation of phosphatidylethanolamine (PtdEtn) from phosphatidylserine (PtdSer). This is Phosphatidylserine decarboxylase proenzyme from Polaromonas sp. (strain JS666 / ATCC BAA-500).